The sequence spans 256 residues: Triosephosphate isomerase (256 aa).

9–11 (NWK) serves as a coordination point for substrate. His95 acts as the Electrophile in catalysis. The Proton acceptor role is filled by Glu167. Residues Gly173, Ser213, and 234–235 (GG) contribute to the substrate site.

This sequence belongs to the triosephosphate isomerase family. Homodimer.

The protein localises to the cytoplasm. The enzyme catalyses D-glyceraldehyde 3-phosphate = dihydroxyacetone phosphate. It functions in the pathway carbohydrate biosynthesis; gluconeogenesis. Its pathway is carbohydrate degradation; glycolysis; D-glyceraldehyde 3-phosphate from glycerone phosphate: step 1/1. Its function is as follows. Involved in the gluconeogenesis. Catalyzes stereospecifically the conversion of dihydroxyacetone phosphate (DHAP) to D-glyceraldehyde-3-phosphate (G3P). This Symbiobacterium thermophilum (strain DSM 24528 / JCM 14929 / IAM 14863 / T) protein is Triosephosphate isomerase.